Reading from the N-terminus, the 583-residue chain is Asparagine synthetase, root [glutamine-hydrolyzing] (583 aa).

Cysteine 2 serves as the catalytic For GATase activity. Residues 2–185 (CGILAVLGCS…PGHLYSSKDS (184 aa)) form the Glutamine amidotransferase type-2 domain. L-glutamine is bound by residues 50–54 (RLAIV), 75–77 (NGE), and aspartate 98. Residues leucine 231, valine 267, and 341–342 (SG) each bind ATP. Positions 237–516 (DSSLVASITS…PQNSARLTVP (280 aa)) constitute an Asparagine synthetase domain.

In terms of tissue distribution, roots.

The catalysed reaction is L-aspartate + L-glutamine + ATP + H2O = L-asparagine + L-glutamate + AMP + diphosphate + H(+). Its pathway is amino-acid biosynthesis; L-asparagine biosynthesis; L-asparagine from L-aspartate (L-Gln route): step 1/1. The protein is Asparagine synthetase, root [glutamine-hydrolyzing] (AS2) of Pisum sativum (Garden pea).